A 281-amino-acid chain; its full sequence is NADPH-dependent 7-cyano-7-deazaguanine reductase (281 aa).

88–90 (IES) lines the substrate pocket. 90–91 (SK) contacts NADPH. Cys-189 functions as the Thioimide intermediate in the catalytic mechanism. The active-site Proton donor is the Asp-196. 228-229 (HE) contacts substrate. 257-258 (RG) provides a ligand contact to NADPH.

This sequence belongs to the GTP cyclohydrolase I family. QueF type 2 subfamily. In terms of assembly, homodimer.

The protein resides in the cytoplasm. The catalysed reaction is 7-aminomethyl-7-carbaguanine + 2 NADP(+) = 7-cyano-7-deazaguanine + 2 NADPH + 3 H(+). It participates in tRNA modification; tRNA-queuosine biosynthesis. In terms of biological role, catalyzes the NADPH-dependent reduction of 7-cyano-7-deazaguanine (preQ0) to 7-aminomethyl-7-deazaguanine (preQ1). This is NADPH-dependent 7-cyano-7-deazaguanine reductase from Sodalis glossinidius (strain morsitans).